A 290-amino-acid chain; its full sequence is 4-hydroxy-3-methylbut-2-enyl diphosphate reductase (290 aa).

C12 serves as a coordination point for [4Fe-4S] cluster. Positions 50 and 83 each coordinate (2E)-4-hydroxy-3-methylbut-2-enyl diphosphate. 2 residues coordinate dimethylallyl diphosphate: H50 and H83. H50 and H83 together coordinate isopentenyl diphosphate. C105 provides a ligand contact to [4Fe-4S] cluster. A (2E)-4-hydroxy-3-methylbut-2-enyl diphosphate-binding site is contributed by H133. Position 133 (H133) interacts with dimethylallyl diphosphate. H133 serves as a coordination point for isopentenyl diphosphate. E135 serves as the catalytic Proton donor. Residue T173 participates in (2E)-4-hydroxy-3-methylbut-2-enyl diphosphate binding. C202 contacts [4Fe-4S] cluster. (2E)-4-hydroxy-3-methylbut-2-enyl diphosphate is bound by residues S230, N232, and S274. Dimethylallyl diphosphate-binding residues include S230, N232, and S274. 3 residues coordinate isopentenyl diphosphate: S230, N232, and S274.

This sequence belongs to the IspH family. [4Fe-4S] cluster is required as a cofactor.

It catalyses the reaction isopentenyl diphosphate + 2 oxidized [2Fe-2S]-[ferredoxin] + H2O = (2E)-4-hydroxy-3-methylbut-2-enyl diphosphate + 2 reduced [2Fe-2S]-[ferredoxin] + 2 H(+). It carries out the reaction dimethylallyl diphosphate + 2 oxidized [2Fe-2S]-[ferredoxin] + H2O = (2E)-4-hydroxy-3-methylbut-2-enyl diphosphate + 2 reduced [2Fe-2S]-[ferredoxin] + 2 H(+). Its pathway is isoprenoid biosynthesis; dimethylallyl diphosphate biosynthesis; dimethylallyl diphosphate from (2E)-4-hydroxy-3-methylbutenyl diphosphate: step 1/1. The protein operates within isoprenoid biosynthesis; isopentenyl diphosphate biosynthesis via DXP pathway; isopentenyl diphosphate from 1-deoxy-D-xylulose 5-phosphate: step 6/6. In terms of biological role, catalyzes the conversion of 1-hydroxy-2-methyl-2-(E)-butenyl 4-diphosphate (HMBPP) into a mixture of isopentenyl diphosphate (IPP) and dimethylallyl diphosphate (DMAPP). Acts in the terminal step of the DOXP/MEP pathway for isoprenoid precursor biosynthesis. The protein is 4-hydroxy-3-methylbut-2-enyl diphosphate reductase of Nitratidesulfovibrio vulgaris (strain DP4) (Desulfovibrio vulgaris).